The sequence spans 260 residues: Tropinone reductase 2 (260 aa).

An NADP(+)-binding site is contributed by 13–37; it reads LVTGGSRGIGYGIVEELANLGASVY. Ser146 provides a ligand contact to substrate. The active-site Proton acceptor is the Tyr159.

The protein belongs to the short-chain dehydrogenases/reductases (SDR) family.

It catalyses the reaction pseudotropine + NADP(+) = tropinone + NADPH + H(+). The protein operates within alkaloid biosynthesis; tropane alkaloid biosynthesis. In terms of biological role, catalyzes the stereospecific reduction of tropinone to pseudotropine. The protein is Tropinone reductase 2 (TR2) of Hyoscyamus niger (Black henbane).